Reading from the N-terminus, the 578-residue chain is Proteasome-associated ATPase (578 aa).

A coiled-coil region spans residues 8-84; sequence TAAELRNQVR…LKEEVDRLAQ (77 aa). ATP is bound at residue 267 to 272; sequence GCGKTL. A docks into pockets in the proteasome alpha-ring region spans residues 577–578; it reads YL.

The protein belongs to the AAA ATPase family. In terms of assembly, homohexamer. Assembles into a hexameric ring structure that caps the 20S proteasome core. Strongly interacts with the prokaryotic ubiquitin-like protein Pup through a hydrophobic interface; the interacting region of ARC lies in its N-terminal coiled-coil domain. There is one Pup binding site per ARC hexamer ring. Upon ATP-binding, the C-terminus of ARC interacts with the alpha-rings of the proteasome core, possibly by binding to the intersubunit pockets.

It functions in the pathway protein degradation; proteasomal Pup-dependent pathway. Its function is as follows. ATPase which is responsible for recognizing, binding, unfolding and translocation of pupylated proteins into the bacterial 20S proteasome core particle. May be essential for opening the gate of the 20S proteasome via an interaction with its C-terminus, thereby allowing substrate entry and access to the site of proteolysis. Thus, the C-termini of the proteasomal ATPase may function like a 'key in a lock' to induce gate opening and therefore regulate proteolysis. This is Proteasome-associated ATPase from Kribbella flavida (strain DSM 17836 / JCM 10339 / NBRC 14399).